We begin with the raw amino-acid sequence, 114 residues long: Secretoglobin family 2B member 2 (114 aa).

The signal sequence occupies residues 1–23; the sequence is MKGTLLLLALLVTGELGFQRTEA.

It belongs to the secretoglobin family. Expressed in lacrimal gland.

The protein localises to the secreted. This is Secretoglobin family 2B member 2 (Scgb2b2) from Mus musculus (Mouse).